The following is a 352-amino-acid chain: Cell division protein ZipA (352 aa).

The Periplasmic segment spans residues 1–6 (MKDLQL). A helical transmembrane segment spans residues 7 to 27 (VLFVLGAIAIIAVLVHGFWSI). Over 28–352 (RKQQPKSMKQ…KDYLRRLNAA (325 aa)) the chain is Cytoplasmic. Disordered regions lie at residues 78–120 (KPVL…HVEP) and 138–160 (PAPT…TSTA). A compositionally biased stretch (polar residues) spans 83-105 (TNLSQKPHSGTTKLTDTPLQDSL). A compositionally biased stretch (basic and acidic residues) spans 111–120 (HKTEPEHVEP). Positions 141–160 (TASTSMNTPKKIFNPSTSTA) are enriched in polar residues.

This sequence belongs to the ZipA family. As to quaternary structure, interacts with FtsZ via their C-terminal domains.

Its subcellular location is the cell inner membrane. In terms of biological role, essential cell division protein that stabilizes the FtsZ protofilaments by cross-linking them and that serves as a cytoplasmic membrane anchor for the Z ring. Also required for the recruitment to the septal ring of downstream cell division proteins. This is Cell division protein ZipA from Shewanella frigidimarina (strain NCIMB 400).